The primary structure comprises 420 residues: UDP-N-acetylglucosamine 1-carboxyvinyltransferase 1 (420 aa).

A phosphoenolpyruvate-binding site is contributed by 22–23 (KN). Arg91 contacts UDP-N-acetyl-alpha-D-glucosamine. Cys115 (proton donor) is an active-site residue. A 2-(S-cysteinyl)pyruvic acid O-phosphothioketal modification is found at Cys115. UDP-N-acetyl-alpha-D-glucosamine is bound by residues 120–124 (RPMDL), Asp303, and Val325.

It belongs to the EPSP synthase family. MurA subfamily.

Its subcellular location is the cytoplasm. The enzyme catalyses phosphoenolpyruvate + UDP-N-acetyl-alpha-D-glucosamine = UDP-N-acetyl-3-O-(1-carboxyvinyl)-alpha-D-glucosamine + phosphate. Its pathway is cell wall biogenesis; peptidoglycan biosynthesis. Cell wall formation. Adds enolpyruvyl to UDP-N-acetylglucosamine. The polypeptide is UDP-N-acetylglucosamine 1-carboxyvinyltransferase 1 (Carboxydothermus hydrogenoformans (strain ATCC BAA-161 / DSM 6008 / Z-2901)).